The following is a 486-amino-acid chain: Patatin-like phospholipase domain-containing protein 2 (486 aa).

Over 1-8 (MFPRETKW) the chain is Cytoplasmic. The chain crosses the membrane as a helical span at residues 9–29 (NISFAGCGFLGVYHIGVASCL). One can recognise a PNPLA domain in the interval 10-179 (ISFAGCGFLG…SDNLPLYELK (170 aa)). A GXGXXG motif is present at residues 14–19 (GCGFLG). Residues 30–42 (REHAPFLVANATH) lie on the Extracellular side of the membrane. N39 carries an N-linked (GlcNAc...) asparagine glycan. A helical transmembrane segment spans residues 43 to 63 (IYGASAGALTATALVTGACLG). A GXSXG motif is present at residues 45–49 (GASAG). The Nucleophile role is filled by S47. The Cytoplasmic segment spans residues 64-137 (EAGANIIEVS…IISHFSSKDE (74 aa)). Residue K92 forms a Glycyl lysine isopeptide (Lys-Gly) (interchain with G-Cter in ubiquitin) linkage. Residues 138 to 158 (LIQANVCSTFIPVYCGLIPPT) form a helical membrane-spanning segment. The Extracellular portion of the chain corresponds to 159–331 (LQGVRYVDGG…TTLSNMLPVR (173 aa)). Catalysis depends on D166, which acts as the Proton acceptor. A DGA/G motif is present at residues 166–168 (DGG). A helical transmembrane segment spans residues 332–352 (LATAMMVPYTLPLESAVSFTI). The Cytoplasmic portion of the chain corresponds to 353–486 (RLLEWLPDVP…PQDPPGLPPC (134 aa)). Residue S374 is modified to Phosphoserine; in vitro. Residues S396 and S406 each carry the phosphoserine; by PKA modification. Phosphoserine; in vitro is present on residues S430 and S468. A compositionally biased stretch (low complexity) spans 465–476 (APASPTAADPAT). Residues 465–486 (APASPTAADPATPQDPPGLPPC) are disordered. Positions 477-486 (PQDPPGLPPC) are enriched in pro residues.

Interacts with ABHD5; this association stimulates PNPLA2 triglyceride hydrolase activity. Interacts with SERPINF1; this interaction stimulates the phospholipase A2 activity of PNPLA2. Despite a colocalization in lipid droplets, it probably does not interact with PLIN. Interacts with PLIN5; prevents interaction with ABHD5. Interacts with FAF2. In terms of processing, phosphorylation at Ser-406 by PKA is increased during fasting and moderate intensity exercise, and moderately increases lipolytic activity. Ubiquitinated by PEX2 in response to reactive oxygen species (ROS), leading to its degradation. Ubiquitination is stimulated by LDAH. As to expression, expressed at high levels in white and brown adipose tissue, and to a lesser degree in testis and cardiac muscle. Barely detected in liver, spleen, thymus, kidney, skeletal muscle, and brain. Among the white adipose depots, gonadal fat showed the highest level of expression compared with inguinal and renal white adipose tissues.

Its subcellular location is the lipid droplet. It localises to the cell membrane. The protein localises to the cytoplasm. It catalyses the reaction a triacylglycerol + H2O = a diacylglycerol + a fatty acid + H(+). The catalysed reaction is a triacylglycerol + H2O = a 1,2-diacylglycerol + a fatty acid + H(+). The enzyme catalyses a triacylglycerol + H2O = a 1,3-diacylglycerol + a fatty acid + H(+). It carries out the reaction a triacyl-sn-glycerol + H2O = a 2,3-diacyl-sn-glycerol + a fatty acid + H(+). It catalyses the reaction a triacyl-sn-glycerol + H2O = a 1,3-diacyl-sn-glycerol + a fatty acid + H(+). The catalysed reaction is 1,2,3-tri-(9Z-octadecenoyl)-glycerol + H2O = 1,3-di-(9Z-octadecenoyl)-glycerol + (9Z)-octadecenoate + H(+). The enzyme catalyses 1,2,3-tri-(9Z)-hexadecenoylglycerol + H2O = 1,3-di-(9Z)-hexadecenoylglycerol + (9Z)-hexadecenoate + H(+). It carries out the reaction 1,2,3-tri-(9Z,12Z)-octadecadienoylglycerol + H2O = 1,3-di-(9Z,12Z)-octadecadienoylglycerol + (9Z,12Z)-octadecadienoate + H(+). It catalyses the reaction 1,2,3-tri-(9Z,12Z,15Z)-octadecatrienoylglycerol + H2O = 1,3-di-(9Z,12Z,15Z)-octadecatrienoylglycerol + (9Z,12Z,15Z)-octadecatrienoate + H(+). The catalysed reaction is 1,3-di-(9Z)-octadecenoyl-2-hexadecanoylglycerol + H2O = 1,3-di-(9Z-octadecenoyl)-glycerol + hexadecanoate + H(+). The enzyme catalyses 1,2-di-(9Z)-octadecenoyl-3-hexadecanoyl-sn-glycerol + H2O = 1-(9Z)-octadecenoyl-3-hexadecanoyl-sn-glycerol + (9Z)-octadecenoate + H(+). It carries out the reaction 1-hexadecanoyl-2,3-di-(9Z)-octadecenoyl-sn-glycerol + H2O = 1-hexadecanoyl-3-(9Z)-octadecenoyl-sn-glycerol + (9Z)-octadecenoate + H(+). It catalyses the reaction 1,2,3-tri-(9Z-octadecenoyl)-glycerol + H2O = 2,3-di-(9Z)-octadecenoyl-sn-glycerol + (9Z)-octadecenoate + H(+). The catalysed reaction is 1,2,3-tri-(9Z)-hexadecenoylglycerol + H2O = 2,3-di-(9Z)-hexadecenoyl-sn-glycerol + (9Z)-hexadecenoate + H(+). The enzyme catalyses 1,2,3-tri-(9Z,12Z)-octadecadienoylglycerol + H2O = 2,3-di-(9Z,12Z)-octadecadienoyl-sn-glycerol + (9Z,12Z)-octadecadienoate + H(+). It carries out the reaction 1,2,3-tri-(9Z,12Z,15Z)-octadecatrienoylglycerol + H2O = 2,3-di-(9Z,12Z,15Z)-octadecatrienoyl-sn-glycerol + (9Z,12Z,15Z)-octadecatrienoate + H(+). It catalyses the reaction 1,3-di-(9Z)-octadecenoyl-2-hexadecanoylglycerol + H2O = 2-hexadecanoyl-3-(9Z)-octadecenoyl-sn-glycerol + (9Z)-octadecenoate + H(+). The catalysed reaction is 1-hexadecanoyl-2,3-di-(9Z)-octadecenoyl-sn-glycerol + H2O = 2,3-di-(9Z)-octadecenoyl-sn-glycerol + hexadecanoate + H(+). The enzyme catalyses 1,2-di-(9Z)-octadecenoyl-3-hexadecanoyl-sn-glycerol + H2O = 2-(9Z-octadecenoyl)-3-hexadecanoyl-sn-glycerol + (9Z)-octadecenoate + H(+). It carries out the reaction 1,2-di-(9Z-octadecenoyl)-glycerol + (9Z)-octadecenoate + H(+) = 1,2,3-tri-(9Z-octadecenoyl)-glycerol + H2O. It catalyses the reaction a 1-acylglycerol + a 1,3-diacylglycerol = a triacylglycerol + glycerol. The catalysed reaction is a 1-acylglycerol + a 1,2-diacylglycerol = a triacylglycerol + glycerol. The enzyme catalyses 2 a 1-acylglycerol = a 1,2-diacylglycerol + glycerol. It carries out the reaction a triacylglycerol + all-trans-retinol = an all-trans-retinyl ester + a diacylglycerol. It catalyses the reaction 1-(9Z-octadecenoyl)-glycerol + 1,3-di-(9Z-octadecenoyl)-glycerol = 1,2,3-tri-(9Z-octadecenoyl)-glycerol + glycerol. The catalysed reaction is 1-(9Z-octadecenoyl)-glycerol + 1,2-di-(9Z-octadecenoyl)-glycerol = 1,2,3-tri-(9Z-octadecenoyl)-glycerol + glycerol. The enzyme catalyses 2 1-(9Z-octadecenoyl)-glycerol = 1,2-di-(9Z-octadecenoyl)-glycerol + glycerol. It carries out the reaction 1,2,3-tri-(9Z-octadecenoyl)-glycerol + all-trans-retinol = all-trans-retinyl 9Z-octadecenoate + di-(9Z)-octadecenoylglycerol. It catalyses the reaction a 1,2-diacyl-sn-glycero-3-phosphocholine + H2O = a 1-acyl-sn-glycero-3-phosphocholine + a fatty acid + H(+). The catalysed reaction is 1,2,3-tri-(9Z-octadecenoyl)-glycerol + 9-hydroxy-octadecanoate = 9-(9Z-octadecenoyloxy)-octadecanoate + 2,3-di-(9Z)-octadecenoyl-sn-glycerol. The enzyme catalyses 1-hexadecanoyl-2,3-di-(9Z)-octadecenoyl-sn-glycerol + 9-hydroxy-octadecanoate = 9-hexadecanoyloxy-octadecanoate + 2,3-di-(9Z)-octadecenoyl-sn-glycerol. It carries out the reaction 1,2,3-tri-(10Z)-heptadecenoylglycerol + 9-hydroxy-octadecanoate = 2,3-di-(10Z-heptadecenoyl)-sn-glycerol + 9-(10Z-heptadecenoyloxy)-octadecanoate. It catalyses the reaction 1,2,3-tri-(9Z,12Z)-octadecadienoylglycerol + 9-hydroxy-octadecanoate = 2,3-di-(9Z,12Z)-octadecadienoyl-sn-glycerol + 9-(9Z,12Z-octadecadienoyloxy)-octadecanoate. The catalysed reaction is 1,2,3-tri-(9Z)-hexadecenoylglycerol + 9-hydroxy-octadecanoate = 2,3-di-(9Z)-hexadecenoyl-sn-glycerol + 9-(9Z-hexadecenoyloxy)-octadecanoate. The enzyme catalyses 9-hydroxy-octadecanoate + 1,2-di-(9Z-octadecenoyl)-sn-glycerol = 9-(9Z-octadecenoyloxy)-octadecanoate + 2-(9Z-octadecenoyl)-glycerol. It carries out the reaction 1-hexadecanoyl-2,3-di-(9Z)-octadecenoyl-sn-glycerol + 9-hydroxy-octadecanoate = 1-hexadecanoyl-3-(9Z)-octadecenoyl-sn-glycerol + 9-(9Z-octadecenoyloxy)-octadecanoate. The protein operates within glycerolipid metabolism; triacylglycerol degradation. Stimulated by PKA-dependent PLIN phosphorylation. Catalyzes the initial step in triglyceride hydrolysis in adipocyte and non-adipocyte lipid droplets. Exhibits a strong preference for the hydrolysis of long-chain fatty acid esters at the sn-2 position of the glycerol backbone and acts coordinately with LIPE/HLS and DGAT2 within the lipolytic cascade. Also possesses acylglycerol transacylase and phospholipase A2 activities. Transfers fatty acid from triglyceride to retinol, hydrolyzes retinylesters, and generates 1,3-diacylglycerol from triglycerides. Regulates adiposome size and may be involved in the degradation of adiposomes. Catalyzes the formation of an ester bond between hydroxy fatty acids and fatty acids derived from triglycerides or diglycerides to generate fatty acid esters of hydroxy fatty acids (FAHFAs) in adipocytes. Acts antagonistically with LDAH in regulation of cellular lipid stores. Inhibits LDAH-stimulated lipid droplet fusion. May play an important role in energy homeostasis. May play a role in the response of the organism to starvation, enhancing hydrolysis of triglycerides and providing free fatty acids to other tissues to be oxidized in situations of energy depletion. The polypeptide is Patatin-like phospholipase domain-containing protein 2 (Mus musculus (Mouse)).